The following is a 201-amino-acid chain: Glycerol-3-phosphate acyltransferase (201 aa).

Transmembrane regions (helical) follow at residues 10–30, 59–79, 87–107, 116–136, and 161–181; these read ALILTGVLGYLLGSIPFGIVI, PAALATLLLDSGKGAIAVLIA, AAQLAAFTSFLGHLFPVWLGF, FLGTLLALAWPVGLACCLTWL, and ILLGYGQMAALGAVLAVLIFI.

It belongs to the PlsY family. Probably interacts with PlsX.

The protein resides in the cell inner membrane. The enzyme catalyses an acyl phosphate + sn-glycerol 3-phosphate = a 1-acyl-sn-glycero-3-phosphate + phosphate. It participates in lipid metabolism; phospholipid metabolism. In terms of biological role, catalyzes the transfer of an acyl group from acyl-phosphate (acyl-PO(4)) to glycerol-3-phosphate (G3P) to form lysophosphatidic acid (LPA). This enzyme utilizes acyl-phosphate as fatty acyl donor, but not acyl-CoA or acyl-ACP. This is Glycerol-3-phosphate acyltransferase from Cereibacter sphaeroides (strain ATCC 17029 / ATH 2.4.9) (Rhodobacter sphaeroides).